The primary structure comprises 465 residues: Ribosomal oxygenase 2 (465 aa).

One can recognise a JmjC domain in the interval 139 to 271 (QPQRFKDELW…NSWGDFLLDT (133 aa)). Fe cation is bound by residues His179, Asp181, and His240. Residue Ser309 is modified to Phosphoserine.

Belongs to the ROX family. MINA53 subfamily. Fe(2+) serves as cofactor.

The protein localises to the nucleus. It localises to the nucleolus. It carries out the reaction L-histidyl-[ribosomal protein uL15] + 2-oxoglutarate + O2 = (3S)-3-hydroxy-L-histidyl-[ribosomal protein uL15] + succinate + CO2. The enzyme catalyses L-histidyl-[protein] + 2-oxoglutarate + O2 = (3S)-3-hydroxy-L-histidyl-[protein] + succinate + CO2. Its function is as follows. Oxygenase that can act as both a histone lysine demethylase and a ribosomal histidine hydroxylase. Is involved in the demethylation of trimethylated 'Lys-9' on histone H3 (H3K9me3), leading to an increase in ribosomal RNA expression. Also catalyzes the hydroxylation of 60S ribosomal protein L27a on 'His-39'. May play an important role in cell growth and survival. May be involved in ribosome biogenesis, most likely during the assembly process of pre-ribosomal particles. In Pongo abelii (Sumatran orangutan), this protein is Ribosomal oxygenase 2 (RIOX2).